The following is an 852-amino-acid chain: Leucine--tRNA ligase (852 aa).

The 'HIGH' region motif lies at 42–52 (PYPSGKLHMGH). Residues 586-606 (NKYVPADQVDPNDPKDPETGE) are disordered. A 'KMSKS' region motif is present at residues 614–618 (KMSKS). Lys617 lines the ATP pocket.

This sequence belongs to the class-I aminoacyl-tRNA synthetase family.

The protein localises to the cytoplasm. It carries out the reaction tRNA(Leu) + L-leucine + ATP = L-leucyl-tRNA(Leu) + AMP + diphosphate. This Picosynechococcus sp. (strain ATCC 27264 / PCC 7002 / PR-6) (Agmenellum quadruplicatum) protein is Leucine--tRNA ligase.